We begin with the raw amino-acid sequence, 383 residues long: 8-amino-7-oxononanoate synthase (383 aa).

A substrate-binding site is contributed by arginine 21. 108–109 lines the pyridoxal 5'-phosphate pocket; it reads GF. Residue histidine 133 coordinates substrate. Residues serine 179, histidine 207, and threonine 233 each contribute to the pyridoxal 5'-phosphate site. Lysine 236 bears the N6-(pyridoxal phosphate)lysine mark. Threonine 350 contributes to the substrate binding site.

This sequence belongs to the class-II pyridoxal-phosphate-dependent aminotransferase family. BioF subfamily. Homodimer. Pyridoxal 5'-phosphate serves as cofactor.

The enzyme catalyses 6-carboxyhexanoyl-[ACP] + L-alanine + H(+) = (8S)-8-amino-7-oxononanoate + holo-[ACP] + CO2. The protein operates within cofactor biosynthesis; biotin biosynthesis. Catalyzes the decarboxylative condensation of pimeloyl-[acyl-carrier protein] and L-alanine to produce 8-amino-7-oxononanoate (AON), [acyl-carrier protein], and carbon dioxide. The protein is 8-amino-7-oxononanoate synthase of Yersinia enterocolitica serotype O:8 / biotype 1B (strain NCTC 13174 / 8081).